The following is a 210-amino-acid chain: Large ribosomal subunit protein uL3 (210 aa).

A disordered region spans residues 126–150 (VSATHGSHRNHRKPGSVGASSTPSR).

This sequence belongs to the universal ribosomal protein uL3 family. As to quaternary structure, part of the 50S ribosomal subunit. Forms a cluster with proteins L14 and L19.

One of the primary rRNA binding proteins, it binds directly near the 3'-end of the 23S rRNA, where it nucleates assembly of the 50S subunit. The sequence is that of Large ribosomal subunit protein uL3 from Tropheryma whipplei (strain TW08/27) (Whipple's bacillus).